The following is a 138-amino-acid chain: MTKPIPRIGSRRNGRIGSRKSGRRIPKGVIHVQASFNNTIVTVTDVLGQVVSWSSAGTCGFRGTRRGTPFAAQTAAGNAIRTVVDQGMQRAEVMIKGPGLGRDAALRAIRRSGILLSFVRDVTPMPHNGCRPPKKRRV.

The disordered stretch occupies residues 1–24; it reads MTKPIPRIGSRRNGRIGSRKSGRR. Positions 9-24 are enriched in basic residues; sequence GSRRNGRIGSRKSGRR.

It belongs to the universal ribosomal protein uS11 family. Part of the 30S ribosomal subunit.

It is found in the plastid. The protein resides in the chloroplast. In Liriodendron tulipifera (Tuliptree), this protein is Small ribosomal subunit protein uS11c.